A 240-amino-acid polypeptide reads, in one-letter code: Probable septum site-determining protein MinC (240 aa).

It belongs to the MinC family. Interacts with MinD and FtsZ.

Its function is as follows. Cell division inhibitor that blocks the formation of polar Z ring septums. Rapidly oscillates between the poles of the cell to destabilize FtsZ filaments that have formed before they mature into polar Z rings. Prevents FtsZ polymerization. The sequence is that of Probable septum site-determining protein MinC from Acinetobacter baumannii (strain AYE).